Here is an 84-residue protein sequence, read N- to C-terminus: Toxin Ts4 (84 aa).

The N-terminal stretch at Met1 to Gly19 is a signal peptide. One can recognise an LCN-type CS-alpha/beta domain in the interval Arg21–Gly82. 4 disulfide bridges follow: Cys31/Cys81, Cys35/Cys57, Cys43/Cys62, and Cys47/Cys64. Cys81 carries the cysteine amide modification. A propeptide spanning residues Gly82–Lys84 is cleaved from the precursor.

This sequence belongs to the long (4 C-C) scorpion toxin superfamily. Sodium channel inhibitor family. Alpha subfamily. In terms of tissue distribution, expressed by the venom gland.

It is found in the secreted. Functionally, not toxic. Induces an immune response similar to that induced by whole venom. Induces a dose dependent release of the neurotransmitters glutamic acid and gamma aminobutyric acid from rat brain synaptosomes. Thus, polyclonal antibodies raised against this protein can neutralize the effects of the venom. In Tityus serrulatus (Brazilian scorpion), this protein is Toxin Ts4.